The following is a 363-amino-acid chain: DNA replication and repair protein RecF (363 aa).

30–37 serves as a coordination point for ATP; sequence GPNGSGKT.

It belongs to the RecF family.

The protein resides in the cytoplasm. The RecF protein is involved in DNA metabolism; it is required for DNA replication and normal SOS inducibility. RecF binds preferentially to single-stranded, linear DNA. It also seems to bind ATP. This is DNA replication and repair protein RecF from Chlorobium phaeobacteroides (strain BS1).